Reading from the N-terminus, the 238-residue chain is Fish-egg lectin (238 aa).

Tandem repeats lie at residues 1–34, 35–68, 69–106, 107–156, and 157–199. Positions 1–199 are 5 X approximate tandem repeats; it reads LDCTVIDGNL…TGVTRSKPDG (199 aa). Intrachain disulfides connect cysteine 3–cysteine 234, cysteine 100–cysteine 153, cysteine 128–cysteine 133, and cysteine 208–cysteine 226. Asparagine 27 carries N-linked (GlcNAc...) asparagine glycosylation.

The protein belongs to the tectonin family. Expressed in the eggs.

Its subcellular location is the secreted. Functionally, lipopolysaccharide-binding protein with a very low agglutinating activity for human A-type erythrocytes and interacts with both Gram-positive and Gram-negative bacteria. This chain is Fish-egg lectin, found in Cyprinus carpio (Common carp).